We begin with the raw amino-acid sequence, 306 residues long: MLSGLVIVDKPQGWTSHDVVGRMRRLAGTRKVGHAGTLDPMATGVLVLGINKATRLLTYIVGTSKTYTATIRLGESTVTDDAEGEVVSSHSAAAVTEGAIRAAVAALTGEIQQVPSSVSAIKVNGERAYARVRSGEDVKLAARPVTIHRFDVHAVRPERAGAVLDVDVTVECSSGTYIRALARDLGEALGTGGHLTALRRTQVGPYTLDQARTLEQLAEELEVLEMSQAARALMPNRELSEDEATEISFGRRIAAGAGAGTPEAATADNPAAAFAPDGSLVALLADAGGYAKPVLVFAPSNEQPGK.

The active-site Nucleophile is the D39.

Belongs to the pseudouridine synthase TruB family. Type 1 subfamily.

The catalysed reaction is uridine(55) in tRNA = pseudouridine(55) in tRNA. Responsible for synthesis of pseudouridine from uracil-55 in the psi GC loop of transfer RNAs. This chain is tRNA pseudouridine synthase B, found in Arthrobacter sp. (strain FB24).